Reading from the N-terminus, the 751-residue chain is Putative tyrosine-protein kinase EpsB (751 aa).

Over M1–R31 the chain is Cytoplasmic. A helical membrane pass occupies residues W32 to A52. The Periplasmic segment spans residues R53–K444. Residues L445–V465 traverse the membrane as a helical segment. Topologically, residues R466–A751 are cytoplasmic.

This sequence belongs to the etk/wzc family.

Its subcellular location is the cell inner membrane. The catalysed reaction is L-tyrosyl-[protein] + ATP = O-phospho-L-tyrosyl-[protein] + ADP + H(+). Probably involved in polymerization and/or export of exopolysaccharide EPS I which functions as a virulence factor. May be involved in an ATP-dependent process in the pathway for EPS I production, possibly export of the trimeric repeat units across the inner membrane or their polymerization. In Ralstonia nicotianae (strain ATCC BAA-1114 / GMI1000) (Ralstonia solanacearum), this protein is Putative tyrosine-protein kinase EpsB (epsB).